A 467-amino-acid chain; its full sequence is Mothers against decapentaplegic homolog 9 (467 aa).

In terms of domain architecture, MH1 spans 16–140 (PAVKRLLGWK…YRRVETPVLP (125 aa)). Zn(2+) contacts are provided by Cys-68, Cys-113, Cys-125, and His-130. The tract at residues 174-246 (NATYPDSFQQ…SETQSGQPVD (73 aa)) is disordered. Residues 205–220 (SYPHSPGSPSEPESPY) show a composition bias toward low complexity. One can recognise an MH2 domain in the interval 273–467 (WCSVAYYELN…SPHNPISSVS (195 aa)).

Belongs to the dwarfin/SMAD family. In terms of assembly, interaction with the co-SMAD SMAD4. Interacts with PEBP2-alpha subunit. Interacts with RANBP3L. Phosphorylated on serine by BMP (bone morphogenetic proteins) type 1 receptor kinase. Expressed in heart, brain, placenta, lung, skeletal muscle, prostate, testis, ovary and small intestine. Also expressed in fetal brain, lung and kidney.

The protein resides in the cytoplasm. The protein localises to the nucleus. Transcriptional modulator activated by BMP (bone morphogenetic proteins) type 1 receptor kinase. SMAD9 is a receptor-regulated SMAD (R-SMAD). The sequence is that of Mothers against decapentaplegic homolog 9 (SMAD9) from Homo sapiens (Human).